The following is a 22-amino-acid chain: Probable ATP-dependent Clp protease proteolytic subunit (22 aa).

The protein belongs to the peptidase S14 family. As to quaternary structure, component of the chloroplastic Clp protease core complex.

The catalysed reaction is Hydrolysis of proteins to small peptides in the presence of ATP and magnesium. alpha-casein is the usual test substrate. In the absence of ATP, only oligopeptides shorter than five residues are hydrolyzed (such as succinyl-Leu-Tyr-|-NHMec, and Leu-Tyr-Leu-|-Tyr-Trp, in which cleavage of the -Tyr-|-Leu- and -Tyr-|-Trp bonds also occurs).. Its function is as follows. Cleaves peptides in various proteins in a process that requires ATP hydrolysis. Has a chymotrypsin-like activity. Plays a major role in the degradation of misfolded proteins. This is Probable ATP-dependent Clp protease proteolytic subunit from Populus euphratica (Euphrates poplar).